Consider the following 495-residue polypeptide: MPWFKNLIKISKTITNQSSSYKSITPLASPLLTQFLQFTKQYSTNDHVVGLEATKSDQKPRIVVLGSGWAGCRLMKDIDTNIYDVVCVSPRNHMVFTPLLASTCVGTLEFRSVAEPIGRIQPAVSTQPASYFFLANCNAIDFDNHMIECETVTEGVETLEAWKFNVSYDKLVIASGAHALTFGIKGVNEHATFLREVHHAQEIRRKLLLNLMLSDVPGVSEEEKRRLLHCVVVGGGPTGVEFSGELSDFILKDVHQRYAHVKDYIHVTLIEANEILSSFDDRLRVYATNQLTKSGVRLVRGLVQHVQPDNIILSDGTNVPYGLLVWSTGVGPSPFVNSLDIPKAKGRIGIDEWLRVPSVQDVYSIGDCSGFLESTGRQVLPALAQVAERQGKYLASLLNKVGKQGGGHANCAQNINLGDPFVYKHLGSMATIGRYKALVDLRESKEAKGVSLAGFTSFFVWRSAYLTRVVSWRNKIYVLINWLTTLVFGRDISRI.

Residues 1–41 (MPWFKNLIKISKTITNQSSSYKSITPLASPLLTQFLQFTKQ) constitute a mitochondrion transit peptide. 61 to 91 (RIVVLGSGWAGCRLMKDIDTNIYDVVCVSPR) provides a ligand contact to FAD. 228–264 (LHCVVVGGGPTGVEFSGELSDFILKDVHQRYAHVKDY) contributes to the NAD(+) binding site. The short motif at 486 to 495 (LVFGRDISRI) is the Microbody targeting signal element.

This sequence belongs to the NADH dehydrogenase family. It depends on FAD as a cofactor.

The protein resides in the mitochondrion inner membrane. It is found in the peroxisome. The catalysed reaction is a quinone + NADH + H(+) = a quinol + NAD(+). It carries out the reaction a ubiquinone + NADH + H(+) = a ubiquinol + NAD(+). Alternative NADH-ubiquinone oxidoreductase which catalyzes the oxidation of mitochondrial NADH does not translocate protons across the inner mitochondrial membrane. This chain is Internal alternative NAD(P)H-ubiquinone oxidoreductase A1, mitochondrial (NDA1), found in Solanum tuberosum (Potato).